We begin with the raw amino-acid sequence, 203 residues long: Thymidylate kinase (203 aa).

9-16 contributes to the ATP binding site; sequence GPEGAGKT.

It belongs to the thymidylate kinase family.

It carries out the reaction dTMP + ATP = dTDP + ADP. Its function is as follows. Phosphorylation of dTMP to form dTDP in both de novo and salvage pathways of dTTP synthesis. In Staphylococcus epidermidis (strain ATCC 35984 / DSM 28319 / BCRC 17069 / CCUG 31568 / BM 3577 / RP62A), this protein is Thymidylate kinase.